Reading from the N-terminus, the 352-residue chain is Large ribosomal subunit protein uL10 (352 aa).

Residues 286–297 (DDEDALPEELQD) show a composition bias toward acidic residues. A disordered region spans residues 286 to 352 (DDEDALPEEL…GAEGLGEMFG (67 aa)). The segment covering 299 to 310 (DAPAAPAGGEAD) has biased composition (low complexity). The span at 324–340 (EADDADDSDDDDDDDDG) shows a compositional bias: acidic residues. The span at 343–352 (GAEGLGEMFG) shows a compositional bias: gly residues.

The protein belongs to the universal ribosomal protein uL10 family. Part of the 50S ribosomal subunit. Forms part of the ribosomal stalk which helps the ribosome interact with GTP-bound translation factors. Forms a heptameric L10(L12)2(L12)2(L12)2 complex, where L10 forms an elongated spine to which the L12 dimers bind in a sequential fashion.

Its function is as follows. Forms part of the ribosomal stalk, playing a central role in the interaction of the ribosome with GTP-bound translation factors. The sequence is that of Large ribosomal subunit protein uL10 from Halobacterium salinarum (strain ATCC 700922 / JCM 11081 / NRC-1) (Halobacterium halobium).